The following is a 342-amino-acid chain: Probable alcohol acetyltransferase (342 aa).

Residues 1-38 (MMILGKAGILAQYGTIYVRQNTIRNNLSSCIFKQSLCA) constitute a mitochondrion transit peptide. Positions 39 to 46 (FHSLAKVL) are cleaved as a propeptide — removed in mature form. An AB hydrolase-1 domain is found at 75-326 (PPIIILHGLF…AGHWVNAEKP (252 aa)). Active-site charge relay system residues include Ser-152 and His-319.

This sequence belongs to the AB hydrolase superfamily. In terms of processing, processed by both the mitochondrial processing peptidase (MPP) and the mitochondrial octapeptidyl aminopeptidase (OCT1).

Its subcellular location is the mitochondrion. In terms of biological role, probable alcohol acetyltransferase that uses acetyl-CoA to synthesize acetate esters from various alcohols. Not involved in the synthesis of ethyl acetate. In Saccharomyces cerevisiae (strain ATCC 204508 / S288c) (Baker's yeast), this protein is Probable alcohol acetyltransferase (IMO32).